The chain runs to 142 residues: MPKKVVGKVKLQLPAGKATPAPPVGPALGQYGVNIMEFCKAYNAATAGQEGMIIPVEITIYEDRSFTFVTKTPPASDLLKKAAGVEKGSGEPNKVKVGKVKRSKIREIAELKMKDLNANDIEAAMRMIEGTARSMGIEIIEG.

The protein belongs to the universal ribosomal protein uL11 family. In terms of assembly, part of the ribosomal stalk of the 50S ribosomal subunit. Interacts with L10 and the large rRNA to form the base of the stalk. L10 forms an elongated spine to which L12 dimers bind in a sequential fashion forming a multimeric L10(L12)X complex. In terms of processing, one or more lysine residues are methylated.

Functionally, forms part of the ribosomal stalk which helps the ribosome interact with GTP-bound translation factors. This Dictyoglomus turgidum (strain DSM 6724 / Z-1310) protein is Large ribosomal subunit protein uL11.